The chain runs to 393 residues: Elongation factor Tu (393 aa).

Residues 10–203 form the tr-type G domain; it reads KPHVNIGTIG…AVDSFIPDPV (194 aa). The segment at 19-26 is G1; the sequence is GHVDHGKT. 19–26 provides a ligand contact to GTP; that stretch reads GHVDHGKT. Threonine 26 is a binding site for Mg(2+). Residues 60 to 64 are G2; sequence GITIS. Residues 81–84 are G3; the sequence is DCPG. Residues 81 to 85 and 136 to 139 each bind GTP; these read DCPGH and NKVD. Residues 136 to 139 are G4; the sequence is NKVD. The interval 173–175 is G5; that stretch reads SAL.

This sequence belongs to the TRAFAC class translation factor GTPase superfamily. Classic translation factor GTPase family. EF-Tu/EF-1A subfamily. In terms of assembly, monomer.

The protein localises to the cytoplasm. It catalyses the reaction GTP + H2O = GDP + phosphate + H(+). Its function is as follows. GTP hydrolase that promotes the GTP-dependent binding of aminoacyl-tRNA to the A-site of ribosomes during protein biosynthesis. The polypeptide is Elongation factor Tu (Pelodictyon phaeoclathratiforme (strain DSM 5477 / BU-1)).